Here is a 131-residue protein sequence, read N- to C-terminus: MDKKTIYFICTGNSCRSQMAEGWGKKILGDEWQVYSGGIEAHGVNPKAIEAMKEVGIDISNHTSNLIDKNILNQSDLVVTLCSDADNNCPILPPNVKKEHWGFDDPAGKPWSEFQRVRDEIKTAIESFKTR.

Catalysis depends on nucleophile residues Cys10, Cys82, and Cys89. 2 disulfide bridges follow: Cys10/Cys82 and Cys82/Cys89.

Belongs to the low molecular weight phosphotyrosine protein phosphatase family. Thioredoxin-coupled ArsC subfamily.

The protein resides in the cytoplasm. It carries out the reaction arsenate + [thioredoxin]-dithiol + H(+) = arsenite + [thioredoxin]-disulfide + H2O. Its function is as follows. Catalyzes the reduction of arsenate [As(V)] to arsenite [As(III)]. In Staphylococcus haemolyticus (strain JCSC1435), this protein is Arsenate reductase 2.